Reading from the N-terminus, the 437-residue chain is Glucose-1-phosphate adenylyltransferase (437 aa).

Alpha-D-glucose 1-phosphate is bound by residues Y113, G179, 194 to 195 (EK), and S212.

This sequence belongs to the bacterial/plant glucose-1-phosphate adenylyltransferase family. As to quaternary structure, homotetramer.

The catalysed reaction is alpha-D-glucose 1-phosphate + ATP + H(+) = ADP-alpha-D-glucose + diphosphate. The protein operates within glycan biosynthesis; glycogen biosynthesis. Functionally, involved in the biosynthesis of ADP-glucose, a building block required for the elongation reactions to produce glycogen. Catalyzes the reaction between ATP and alpha-D-glucose 1-phosphate (G1P) to produce pyrophosphate and ADP-Glc. The polypeptide is Glucose-1-phosphate adenylyltransferase (Haemophilus influenzae (strain ATCC 51907 / DSM 11121 / KW20 / Rd)).